Here is a 763-residue protein sequence, read N- to C-terminus: Formin-like protein 4 (763 aa).

Residues 1 to 33 (MAAMLMQPWPPFLPHLTLVFLTLILFFPNQSFS) form the signal peptide. Positions 52 to 73 (PPVQSPVLSPPQNPSSSSSDSD) are disordered. Residues 80–100 (AVLITAASTLLVAAVFFFLVH) traverse the membrane as a helical segment. Disordered stretches follow at residues 185 to 327 (IYSK…DSDH) and 726 to 763 (RSSM…DSDM). Positions 205–225 (RSSTSHSVIHNDNYRNATTTH) are enriched in polar residues. Residues 229–238 (VKTDSFEFVK) show a composition bias toward basic and acidic residues. Positions 240–280 (DPTPPPPPPPPIPVKQSATPPPPPPPKLKNNGPSPPPPPPL) are enriched in pro residues. The segment covering 281–292 (KKTAALSSSASK) has biased composition (low complexity). The region spanning 303–738 (SGESSNGQVK…MGSTQQRNAV (436 aa)) is the FH2 domain. Basic and acidic residues predominate over residues 316 to 327 (LHWDKVNPDSDH). Over residues 726 to 736 (RSSMGSTQQRN) the composition is skewed to polar residues.

This sequence belongs to the formin-like family. Class-I subfamily. Interacts with profilin. Expressed in the whole plant (at protein level).

The protein resides in the cell membrane. Its function is as follows. Might be involved in the organization and polarity of the actin cytoskeleton. This chain is Formin-like protein 4 (FH4), found in Arabidopsis thaliana (Mouse-ear cress).